Reading from the N-terminus, the 467-residue chain is DNA methyltransferase 1-associated protein 1 (467 aa).

Basic and acidic residues-rich tracts occupy residues 1–11 (MATGADVRDIL) and 26–48 (SKKDIINPDKKKSKKSSETLTFK). A disordered region spans residues 1 to 48 (MATGADVRDILELGGPEGDAASGTISKKDIINPDKKKSKKSSETLTFK). Lys-27 is covalently cross-linked (Glycyl lysine isopeptide (Lys-Gly) (interchain with G-Cter in SUMO2)). The region spanning 149 to 199 (DDAWTKAETDHLFDLSRRFDLRFVVIHDRYDHQQFKKRSVEDLKERYYHIC) is the SANT domain. Lys-214 is covalently cross-linked (Glycyl lysine isopeptide (Lys-Gly) (interchain with G-Cter in SUMO2)). A coiled-coil region spans residues 225-275 (RRKEQLERLYNRTPEQVAEEEYLLQELRKIEARKKEREKRSQDLQKLITAA). Positions 258–267 (KKEREKRSQD) are enriched in basic and acidic residues. Disordered stretches follow at residues 258-305 (KKER…PAVP) and 404-467 (LGGP…AKKP). Positions 406–422 (GPATPASGPGPASAEPA) are enriched in low complexity. Thr-445 carries the phosphothreonine modification. Ser-448 carries the post-translational modification Phosphoserine.

Component of the NuA4 histone acetyltransferase complex which contains the catalytic subunit KAT5/TIP60 and the subunits EP400, TRRAP/PAF400, BRD8/SMAP, EPC1, DMAP1/DNMAP1, RUVBL1/TIP49, RUVBL2, ING3, actin, ACTL6A/BAF53A, MORF4L1/MRG15, MORF4L2/MRGX, MRGBP, YEATS4/GAS41, VPS72/YL1 and MEAF6. Component of a NuA4-related complex which contains EP400, TRRAP/PAF400, SRCAP, BRD8/SMAP, EPC1, DMAP1/DNMAP1, RUVBL1/TIP49, RUVBL2, actin, ACTL6A/BAF53A, VPS72 and YEATS4/GAS41. DMAP1 also forms a complex with DNMT1 and HDAC2. Throughout S phase it interacts directly with the N-terminus of DNMT1, which serves to recruit DMAP1 to replication foci. DMAP1 interacts with ING1, a component of the mSin3A transcription repressor complex, although this interaction is not required for recruitment of ING1 to heterochromatin. Interacts directly with the transcriptional corepressor TSG101. Interacts with the pro-apoptotic protein DAXX. Interacts with URI1.

It is found in the nucleus. The protein localises to the cytoplasm. Involved in transcription repression and activation. Its interaction with HDAC2 may provide a mechanism for histone deacetylation in heterochromatin following replication of DNA at late firing origins. Can also repress transcription independently of histone deacetylase activity. May specifically potentiate DAXX-mediated repression of glucocorticoid receptor-dependent transcription. Component of the NuA4 histone acetyltransferase (HAT) complex which is involved in transcriptional activation of select genes principally by acetylation of nucleosomal histones H4 and H2A. This modification may both alter nucleosome - DNA interactions and promote interaction of the modified histones with other proteins which positively regulate transcription. This complex may be required for the activation of transcriptional programs associated with oncogene and proto-oncogene mediated growth induction, tumor suppressor mediated growth arrest and replicative senescence, apoptosis, and DNA repair. NuA4 may also play a direct role in DNA repair when recruited to sites of DNA damage. Participates in the nuclear localization of URI1 and increases its transcriptional corepressor activity. This chain is DNA methyltransferase 1-associated protein 1 (DMAP1), found in Homo sapiens (Human).